Here is a 619-residue protein sequence, read N- to C-terminus: Probable pectinesterase/pectinesterase inhibitor 25 (619 aa).

The signal sequence occupies residues 1 to 23; that stretch reads MKMQTLNFTSSLLFLSFIFLSCA. Residues 31-84 form a disordered region; it reads SPSQPHSEPPSQLPFEPPVESPFFPPSQPPIFVPPSQPPSLPPSQSQSPSLACK. Positions 37-72 are enriched in pro residues; the sequence is SEPPSQLPFEPPVESPFFPPSQPPIFVPPSQPPSLP. The pectinesterase inhibitor 25 stretch occupies residues 73–231; it reads PSQSQSPSLA…TRLYSISLGL (159 aa). N-linked (GlcNAc...) asparagine glycosylation is found at N220, N255, N312, N325, and N364. The tract at residues 302 to 601 is pectinesterase 25; it reads AVIVGPFKSD…FTVYNFTMGD (300 aa). T380 serves as a coordination point for substrate. N382 is a glycosylation site (N-linked (GlcNAc...) asparagine). Q410 is a substrate binding site. D433 (proton donor; for pectinesterase activity) is an active-site residue. A disulfide bond links C447 and C467. D454 serves as the catalytic Nucleophile; for pectinesterase activity. An N-linked (GlcNAc...) asparagine glycan is attached at N500. R522 and W524 together coordinate substrate. Residues N550, N591, and N596 are each glycosylated (N-linked (GlcNAc...) asparagine).

The protein in the N-terminal section; belongs to the PMEI family. It in the C-terminal section; belongs to the pectinesterase family. As to expression, expressed in siliques.

The protein localises to the secreted. It is found in the cell wall. It carries out the reaction [(1-&gt;4)-alpha-D-galacturonosyl methyl ester](n) + n H2O = [(1-&gt;4)-alpha-D-galacturonosyl](n) + n methanol + n H(+). Its pathway is glycan metabolism; pectin degradation; 2-dehydro-3-deoxy-D-gluconate from pectin: step 1/5. Acts in the modification of cell walls via demethylesterification of cell wall pectin. This Arabidopsis thaliana (Mouse-ear cress) protein is Probable pectinesterase/pectinesterase inhibitor 25 (PME25).